Here is a 279-residue protein sequence, read N- to C-terminus: Probable ribosomal RNA small subunit methyltransferase A (279 aa).

Asn-23, Leu-25, Gly-50, Glu-71, Asp-95, and Asn-110 together coordinate S-adenosyl-L-methionine.

It belongs to the class I-like SAM-binding methyltransferase superfamily. rRNA adenine N(6)-methyltransferase family. RsmA subfamily.

The protein localises to the cytoplasm. Its function is as follows. Specifically dimethylates two adjacent adenosines in the loop of a conserved hairpin near the 3'-end of 16S rRNA in the 30S particle. May play a critical role in biogenesis of 30S subunits. This Thermococcus kodakarensis (strain ATCC BAA-918 / JCM 12380 / KOD1) (Pyrococcus kodakaraensis (strain KOD1)) protein is Probable ribosomal RNA small subunit methyltransferase A.